The primary structure comprises 90 residues: Albumin-1 (90 aa).

Residue A1 is a signal peptide. 3 cysteine pairs are disulfide-bonded: C4-C21, C8-C23, and C16-C34. The propeptide occupies 40–47 (LSSVAKMI).

The C-terminal glycine may be removed from A1b.

Its function is as follows. A1b binds to basic 7S globulin (BG) and stimulates its phosphorylation activity. The polypeptide is Albumin-1 (LEG) (Phaseolus angularis (Azuki bean)).